The following is a 218-amino-acid chain: Ras-related protein R-Ras (218 aa).

The tract at residues 1 to 30 (MSSGAASGTGRGRPRGGGPGPRDPPPGETH) is disordered. Residues 7–20 (SGTGRGRPRGGGPG) show a composition bias toward gly residues. GTP is bound at residue 36–44 (GGGGVGKSA). Positions 58–66 (YDPTIEDSY) match the Effector region motif. Residues 83–87 (DTAGQ), 142–145 (NKAD), and 172–174 (SAK) each bind GTP. A Cysteine methyl ester modification is found at Cys215. Cys215 is lipidated: S-geranylgeranyl cysteine. A propeptide spans 216 to 218 (VLL) (removed in mature form).

Belongs to the small GTPase superfamily. Ras family. As to quaternary structure, interacts with PLCE1. Interacts (active GTP-bound form preferentially) with RGS14. Interacts with OSBPL3. Interacts with ZDHHC19. Post-translationally, S-palmitoylated by ZDHHC19, leading to increased association with membranes and with rafts/caveolae as well as enhanced cell viability.

The protein resides in the cell membrane. It carries out the reaction GTP + H2O = GDP + phosphate + H(+). Functionally, GTP-binding protein with GTPase activity, likely involved in the regulation of MAPK signaling pathway and thereby controlling multiple cellular processes. Regulates the organization of the actin cytoskeleton. With OSPBL3, modulates integrin beta-1 (ITGB1) activity. The sequence is that of Ras-related protein R-Ras (Rras) from Mus musculus (Mouse).